We begin with the raw amino-acid sequence, 1114 residues long: M-phase phosphoprotein 9 (1114 aa).

5 disordered regions span residues methionine 1–proline 55, arginine 106–valine 161, alanine 183–alanine 207, threonine 267–proline 301, and valine 410–proline 468. Residues alanine 24–glycine 51 show a composition bias toward polar residues. A compositionally biased stretch (low complexity) spans arginine 106–serine 119. Residues glutamine 149 to valine 161 show a composition bias toward polar residues. 2 stretches are compositionally biased toward polar residues: residues threonine 267–glutamine 280 and histidine 429–alanine 446. The segment at leucine 368 to glutamate 729 is required for its centrosomal localization. The interaction with CEP97 stretch occupies residues lysine 382–proline 431. Positions aspartate 574–serine 733 form a coiled coil. Serine 710 carries the phosphoserine; by TTBK2 modification. Lysine 713 participates in a covalent cross-link: Glycyl lysine isopeptide (Lys-Gly) (interchain with G-Cter in ubiquitin). Residue serine 717 is modified to Phosphoserine; by TTBK2. 3 disordered regions span residues glutamate 727–valine 755, serine 840–histidine 931, and glutamate 975–lysine 1002. An interaction with KIF24 region spans residues serine 730–alanine 963. Residues serine 852–arginine 868 show a composition bias toward polar residues. Over residues glutamine 881–alanine 898 the composition is skewed to low complexity. Serine 926 is subject to Phosphoserine. Over residues glutamate 975–aspartate 985 the composition is skewed to basic and acidic residues. A coiled-coil region spans residues arginine 1040–phenylalanine 1105.

As to quaternary structure, interacts with CCP110, CEP97 and KIF24. TTBK2-mediated phosphorylation at Ser-710 and Ser-717, promotes its ubiquitination at Lys-713 leading to proteasomal degradation, loss of MPHOSPH9 facilitates the removal of the CP110-CEP97 complex from the mother centrioles, promoting the initiation of ciliogenesis. Phosphorylated in M (mitotic) phase. Post-translationally, ubiquitinated at Lys-713, leading to proteasomal degradation.

It is found in the cytoplasm. Its subcellular location is the cytoskeleton. The protein localises to the microtubule organizing center. It localises to the centrosome. The protein resides in the centriole. It is found in the golgi apparatus membrane. Negatively regulates cilia formation by recruiting the CP110-CEP97 complex (a negative regulator of ciliogenesis) at the distal end of the mother centriole in ciliary cells. At the beginning of cilia formation, MPHOSPH9 undergoes TTBK2-mediated phosphorylation and degradation via the ubiquitin-proteasome system and removes itself and the CP110-CEP97 complex from the distal end of the mother centriole, which subsequently promotes cilia formation. This chain is M-phase phosphoprotein 9 (Mphosph9), found in Mus musculus (Mouse).